Here is a 1074-residue protein sequence, read N- to C-terminus: Phospholipase D1 (1074 aa).

The 132-residue stretch at 81–212 (IKAQVLEVER…TEFLDISQLS (132 aa)) folds into the PX domain. Residues 219-328 (PKGIEGMIMK…WGGAIEEFIQ (110 aa)) form the PH domain. 2 S-palmitoyl cysteine lipidation sites follow: Cys-240 and Cys-241. The region spanning 459–486 (YLWAHHEKLVIIDQSVAFVGGIDLAYGR) is the PLD phosphodiesterase 1 domain. A catalytic region spans residues 463–928 (HHEKLVIIDQ…MLGKRDSEMA (466 aa)). A phosphoserine mark is found at Ser-499, Ser-561, and Ser-629. Positions 891–918 (ELIYVHSKLLIADDNTVIIGSANINDRS) constitute a PLD phosphodiesterase 2 domain.

This sequence belongs to the phospholipase D family. As to quaternary structure, interacts with PIP5K1B. As to expression, expressed abundantly in the pancreas and heart and at high levels in brain, placenta, spleen, uterus and small intestine.

It is found in the cytoplasm. It localises to the perinuclear region. The protein resides in the endoplasmic reticulum membrane. Its subcellular location is the golgi apparatus membrane. The protein localises to the late endosome membrane. The enzyme catalyses a 1,2-diacyl-sn-glycero-3-phosphocholine + H2O = a 1,2-diacyl-sn-glycero-3-phosphate + choline + H(+). It carries out the reaction ethanol + a 1,2-diacyl-sn-glycero-3-phosphocholine = 1,2-diacyl-sn-glycero-3-phosphoethanol + choline. It catalyses the reaction 1,2-dihexadecanoyl-sn-glycero-3-phosphocholine + H2O = 1,2-dihexadecanoyl-sn-glycero-3-phosphate + choline + H(+). With respect to regulation, stimulated by phosphatidylinositol 4,5-bisphosphate and phosphatidylinositol 3,4,5-trisphosphate, activated by the phosphokinase C-alpha, by the ADP-ribosylation factor-1 (ARF-1), and to a lesser extent by GTP-binding proteins: RHO A, RAC-1 and CDC42. Inhibited by oleate. Function as phospholipase selective for phosphatidylcholine. Implicated as a critical step in numerous cellular pathways, including signal transduction, membrane trafficking, and the regulation of mitosis. May be involved in the regulation of perinuclear intravesicular membrane traffic. The polypeptide is Phospholipase D1 (Homo sapiens (Human)).